A 42-amino-acid polypeptide reads, in one-letter code: Photosystem II reaction center protein J (42 aa).

A helical membrane pass occupies residues 10 to 30 (IPLWIIGTLAGTLVIGLLAIF).

It belongs to the PsbJ family. PSII is composed of 1 copy each of membrane proteins PsbA, PsbB, PsbC, PsbD, PsbE, PsbF, PsbH, PsbI, PsbJ, PsbK, PsbL, PsbM, PsbT, PsbX, PsbY, PsbZ, Psb30/Ycf12, at least 3 peripheral proteins of the oxygen-evolving complex and a large number of cofactors. It forms dimeric complexes.

It localises to the plastid. Its subcellular location is the chloroplast thylakoid membrane. In terms of biological role, one of the components of the core complex of photosystem II (PSII). PSII is a light-driven water:plastoquinone oxidoreductase that uses light energy to abstract electrons from H(2)O, generating O(2) and a proton gradient subsequently used for ATP formation. It consists of a core antenna complex that captures photons, and an electron transfer chain that converts photonic excitation into a charge separation. The protein is Photosystem II reaction center protein J of Chaetosphaeridium globosum (Charophycean green alga).